A 924-amino-acid polypeptide reads, in one-letter code: Type II inositol 3,4-bisphosphate 4-phosphatase (924 aa).

Basic and acidic residues predominate over residues 1–13 (MEIKEEGASEEGQ). Disordered stretches follow at residues 1 to 25 (MEIKEEGASEEGQHFLPTAQASDPG), 481 to 516 (ILKKPPSPKSSTEESSPQDQPPLMRGQDSIPHHSDY), and 546 to 569 (DGGSEGSGGNNDGEKEPSLADAIP). The region spanning 23–165 (DPGDCQFTSI…LKSKEQLLVL (143 aa)) is the C2 domain.

Belongs to the inositol 3,4-bisphosphate 4-phosphatase family.

The catalysed reaction is a 1,2-diacyl-sn-glycero-3-phospho-(1D-myo-inositol-3,4-bisphosphate) + H2O = a 1,2-diacyl-sn-glycero-3-phospho-(1D-myo-inositol-3-phosphate) + phosphate. It carries out the reaction 1D-myo-inositol 1,3,4-trisphosphate + H2O = 1D-myo-inositol 1,3-bisphosphate + phosphate. It catalyses the reaction 1D-myo-inositol 3,4-bisphosphate + H2O = 1D-myo-inositol 3-phosphate + phosphate. Its pathway is signal transduction; phosphatidylinositol signaling pathway. With respect to regulation, strongly inhibited by inositol hexakisphosphate. In terms of biological role, catalyzes the hydrolysis of the 4-position phosphate of phosphatidylinositol 3,4-bisphosphate, inositol 1,3,4-trisphosphate and inositol 3,4-bisphosphate. Plays a role in the late stages of macropinocytosis by dephosphorylating phosphatidylinositol 3,4-bisphosphate in membrane ruffles. Antagonizes the PI3K-AKT/PKB signaling pathway by dephosphorylating phosphoinositides and thereby modulating cell cycle progression and cell survival. The sequence is that of Type II inositol 3,4-bisphosphate 4-phosphatase (INPP4B) from Pongo abelii (Sumatran orangutan).